Consider the following 800-residue polypeptide: Mitogen-activated protein kinase kinase kinase 20 (800 aa).

Serine 2 carries the post-translational modification N-acetylserine. Phosphoserine; by autocatalysis occurs at positions 2, 3, and 7. The region spanning 16–277 is the Protein kinase domain; sequence LQFFENCGGG…SLPDKCNSFL (262 aa). Residues 22-30 and lysine 45 contribute to the ATP site; that span reads CGGGSFGSV. The Proton acceptor role is filled by aspartate 133. At threonine 161 the chain carries Phosphothreonine; by autocatalysis. Position 165 is a phosphoserine; by autocatalysis (serine 165). Serine 275 carries the post-translational modification Phosphoserine. Positions 287-308 are leucine-zipper; that stretch reads IEATLERLKKLERDLSFKEQEL. At serine 302 the chain carries Phosphoserine; by autocatalysis. Phosphoserine occurs at positions 339, 429, 434, 454, and 567. Residues 339 to 410 form the SAM domain; sequence WTEDDVYCWV…KSAIEKLTHD (72 aa). Threonine 586 carries the post-translational modification Phosphothreonine; by autocatalysis. Serine 587 carries the post-translational modification Phosphoserine; by autocatalysis. Phosphoserine occurs at positions 593 and 599. Residue threonine 628 is modified to Phosphothreonine. A phosphoserine mark is found at serine 633, serine 637, and serine 648. 2 positions are modified to phosphoserine; by autocatalysis: serine 649 and serine 660. Over residues 652–666 the composition is skewed to polar residues; the sequence is LNSRDSGFSSGNTDT. The segment at 652–800 is disordered; sequence LNSRDSGFSS…RGDHRGWRNF (149 aa). Threonine 664 is modified (phosphothreonine; by autocatalysis). The span at 667–678 shows a compositional bias: basic and acidic residues; that stretch reads SSERGRYSDRSR. The segment at 670–713 is sensing domain (S); sequence RGRYSDRSRNKYGRGSISLNSSPRGRYSGKSQHSTPSRGRYPGK. Serine 685 carries the phosphoserine modification. Composition is skewed to polar residues over residues 686 to 706 and 717 to 726; these read ISLNSSPRGRYSGKSQHSTPS and VSQSALNPHQ. 2 positions are modified to phosphoserine; by autocatalysis: serine 718 and serine 720. 2 positions are modified to phosphoserine: serine 727 and serine 733. Basic and acidic residues predominate over residues 728–738; that stretch reads PDFKRSPRDLH. Threonine 742 is modified (phosphothreonine; by autocatalysis). Composition is skewed to basic and acidic residues over residues 750 to 763 and 785 to 800; these read PETDSRASEEDSKV and TNKERARGDHRGWRNF. The C-terminal domain (CTD) stretch occupies residues 774 to 800; that stretch reads RKKPHRPSPAKTNKERARGDHRGWRNF.

The protein belongs to the protein kinase superfamily. STE Ser/Thr protein kinase family. MAP kinase kinase kinase subfamily. Homodimer. Interacts with ZNF33A. Component of a signaling complex containing at least AKAP13, PKN1, MAPK14, MAP3K20 and MAP2K3. Within this complex, AKAP13 interacts directly with PKN1, which in turn recruits MAPK14, MAP2K3 and MAP3K20. Interacts with EIF2AK4/GCN2; promoting EIF2AK4/GCN2 kinase activity. As to quaternary structure, interacts with isoform ZAKbeta. In terms of assembly, interacts with isoform ZAKalpha. Mg(2+) serves as cofactor. Activated by phosphorylation by PKN1, followed by autophosphorylation on Thr-161 and Ser-165. Autophosphorylation in response to ribotoxic stress promotes dissociation from colliding ribosomes and activation. In terms of tissue distribution, ubiquitously expressed. Isoform ZAKbeta is the predominant form in all tissues examined, except for liver, in which isoform ZAKalpha is more highly expressed.

Its subcellular location is the cytoplasm. It is found in the nucleus. It carries out the reaction L-seryl-[protein] + ATP = O-phospho-L-seryl-[protein] + ADP + H(+). The catalysed reaction is L-threonyl-[protein] + ATP = O-phospho-L-threonyl-[protein] + ADP + H(+). Activated in response to stress, such as ribosomal stress, osmotic shock and ionizing radiation. Activated by phosphorylation by PKN1, followed by autophosphorylation on Thr-161 and Ser-165. Inhibited by nilotinib, sorafenib, dabrafenib, rebastinib and vemurafenib. Selectively inhibited by N-(3)-((1H-Pyrazolo[3,4-b]pyridin-5-yl)ethynyl)benzenesulfonamide compound 3h. Selectively inhibited by 1,2,3-triazole benzenesulfonamides. Its function is as follows. Stress-activated component of a protein kinase signal transduction cascade that promotes programmed cell death in response to various stress, such as ribosomal stress, osmotic shock and ionizing radiation. Acts by catalyzing phosphorylation of MAP kinase kinases, leading to activation of the JNK (MAPK8/JNK1, MAPK9/JNK2 and/or MAPK10/JNK3) and MAP kinase p38 (MAPK11, MAPK12, MAPK13 and/or MAPK14) pathways. Activates JNK through phosphorylation of MAP2K4/MKK4 and MAP2K7/MKK7, and MAP kinase p38 gamma (MAPK12) via phosphorylation of MAP2K3/MKK3 and MAP2K6/MKK6. Involved in stress associated with adrenergic stimulation: contributes to cardiac decompensation during periods of acute cardiac stress. May be involved in regulation of S and G2 cell cycle checkpoint by mediating phosphorylation of CHEK2. In terms of biological role, key component of the stress-activated protein kinase signaling cascade in response to ribotoxic stress or UV-B irradiation. Acts as the proximal sensor of ribosome collisions during the ribotoxic stress response (RSR): directly binds to the ribosome by inserting its flexible C-terminus into the ribosomal intersubunit space, thereby acting as a sentinel for colliding ribosomes. Upon ribosome collisions, activates either the stress-activated protein kinase signal transduction cascade or the integrated stress response (ISR), leading to programmed cell death or cell survival, respectively. Dangerous levels of ribosome collisions trigger the autophosphorylation and activation of MAP3K20, which dissociates from colliding ribosomes and phosphorylates MAP kinase kinases, leading to activation of the JNK and MAP kinase p38 pathways that promote programmed cell death. Less dangerous levels of ribosome collisions trigger the integrated stress response (ISR): MAP3K20 activates EIF2AK4/GCN2 independently of its protein-kinase activity, promoting EIF2AK4/GCN2-mediated phosphorylation of EIF2S1/eIF-2-alpha. Also part of the stress-activated protein kinase signaling cascade triggering the NLRP1 inflammasome in response to UV-B irradiation: ribosome collisions activate MAP3K20, which directly phosphorylates NLRP1, leading to activation of the NLRP1 inflammasome and subsequent pyroptosis. NLRP1 is also phosphorylated by MAP kinase p38 downstream of MAP3K20. Also acts as a histone kinase by phosphorylating histone H3 at 'Ser-28' (H3S28ph). Isoform that lacks the C-terminal region that mediates ribosome-binding: does not act as a sensor of ribosome collisions in response to ribotoxic stress. May act as an antagonist of isoform ZAKalpha: interacts with isoform ZAKalpha, leading to decrease the expression of isoform ZAKalpha. In Homo sapiens (Human), this protein is Mitogen-activated protein kinase kinase kinase 20.